We begin with the raw amino-acid sequence, 319 residues long: Heavy metal-associated isoprenylated plant protein 9 (319 aa).

Basic and acidic residues-rich tracts occupy residues 1–11 (MGEEVKPEAKE) and 24–45 (EEKKKDVAEEKKVAAEEEKPKE). A disordered region spans residues 1 to 57 (MGEEVKPEAKEAASAPQAVPAEEEEKKKDVAEEKKVAAEEEKPKEEEEPQPPPPPPP). Positions 21 to 48 (AEEEEKKKDVAEEKKVAAEEEKPKEEEE) form a coiled coil. HMA domains are found at residues 55 to 118 (PPPF…KRMA) and 144 to 208 (LTTV…KQAR). Residues Cys-66, Cys-69, Cys-155, and Cys-158 each contribute to the a metal cation site. A disordered region spans residues 207-282 (ARIVPQPDPE…RDNEMTAMAQ (76 aa)). Residues 224–254 (QEEKKEESGEGNEKPPETGEEKEEEKKKEGE) show a composition bias toward basic and acidic residues. Acidic residues predominate over residues 255–268 (ENGEEGGGEEAAAT). Residue Cys-316 is modified to Cysteine methyl ester. Cys-316 carries the S-farnesyl cysteine lipid modification. Positions 317–319 (CIS) are cleaved as a propeptide — removed in mature form.

The protein belongs to the HIPP family.

Its function is as follows. Heavy-metal-binding protein. The sequence is that of Heavy metal-associated isoprenylated plant protein 9 from Arabidopsis thaliana (Mouse-ear cress).